The following is a 249-amino-acid chain: Cysteine-rich secretory protein 1 (249 aa).

The N-terminal stretch at 1 to 20 (MEIKHLLFLVAAACLLPVLS) is a signal peptide. The SCP domain occupies 45-175 (VNIHNTLRRG…SPRYFYVCHY (131 aa)). The N-linked (GlcNAc...) asparagine glycan is linked to N104. 5 cysteine pairs are disulfide-bonded: C195-C202, C198-C207, C211-C244, C220-C238, and C229-C242. One can recognise a ShKT domain in the interval 211-244 (CIYYDEYTDCSLEVRFLGCNHSTPRMFCKATCLC). N230 carries an N-linked (GlcNAc...) asparagine glycan.

The protein belongs to the CRISP family. As to expression, expressed in all the regions of the epididymis except the caput and is not detected in the testis, prostate, seminal vesicle, and brain.

Its function is as follows. May have a role in sperm-egg fusion and maturation. This chain is Cysteine-rich secretory protein 1 (CRISP1), found in Macaca mulatta (Rhesus macaque).